Reading from the N-terminus, the 480-residue chain is Probable histone deacetylase 1-B (480 aa).

The tract at residues 10 to 321 (KVCYYYDGDV…WTYETAVALD (312 aa)) is histone deacetylase. H141 is a catalytic residue. The interval 387-480 (DSVHDDSGEE…KRVKEETKSV (94 aa)) is disordered. Residues 401–416 (PDKRISIRSSDKRIAC) show a composition bias toward basic and acidic residues. Acidic residues predominate over residues 417–427 (DEEFSDSEDEG). Positions 443–480 (VKTEEEKEGEDKKDVKEEEKAKDEKTDSKRVKEETKSV) are enriched in basic and acidic residues.

The protein belongs to the histone deacetylase family. HD type 1 subfamily. Found in a large complex with RBBP4 and MI-2.

Its subcellular location is the nucleus. It localises to the cytoplasm. The enzyme catalyses N(6)-acetyl-L-lysyl-[histone] + H2O = L-lysyl-[histone] + acetate. The catalysed reaction is N(6)-acetyl-L-lysyl-[protein] + H2O = L-lysyl-[protein] + acetate. It catalyses the reaction N(6)-(2E)-butenoyl-L-lysyl-[protein] + H2O = (2E)-2-butenoate + L-lysyl-[protein]. In terms of biological role, histone deacetylase that catalyzes the deacetylation of lysine residues on the N-terminal part of the core histones (H2A, H2B, H3 and H4). Histone deacetylation gives a tag for epigenetic repression and plays an important role in transcriptional regulation, cell cycle progression and developmental events. Histone deacetylases act via the formation of large multiprotein complexes. Also functions as a deacetylase for non-histone proteins. In addition to protein deacetylase activity, also has protein-lysine deacylase activity: acts as a protein decrotonylase by mediating decrotonylation ((2E)-butenoyl) of histones. The sequence is that of Probable histone deacetylase 1-B (hdac1-b) from Xenopus laevis (African clawed frog).